Consider the following 180-residue polypeptide: Oligoribonuclease (180 aa).

Residues 7–170 (LIWIDLEMTG…DDIRESIAEL (164 aa)) form the Exonuclease domain. Residue Y128 is part of the active site.

It belongs to the oligoribonuclease family.

The protein localises to the cytoplasm. In terms of biological role, 3'-to-5' exoribonuclease specific for small oligoribonucleotides. The chain is Oligoribonuclease from Pseudomonas fluorescens (strain ATCC BAA-477 / NRRL B-23932 / Pf-5).